The following is a 1525-amino-acid chain: Autophagy-related protein 2 (1525 aa).

It belongs to the ATG2 family.

Its subcellular location is the preautophagosomal structure membrane. The protein resides in the endoplasmic reticulum membrane. The enzyme catalyses a 1,2-diacyl-sn-glycero-3-phosphocholine(in) = a 1,2-diacyl-sn-glycero-3-phosphocholine(out). The catalysed reaction is a 1,2-diacyl-sn-glycero-3-phospho-L-serine(in) = a 1,2-diacyl-sn-glycero-3-phospho-L-serine(out). It carries out the reaction a 1,2-diacyl-sn-glycero-3-phosphoethanolamine(in) = a 1,2-diacyl-sn-glycero-3-phosphoethanolamine(out). In terms of biological role, lipid transfer protein required for autophagosome completion and peroxisome degradation. Tethers the edge of the isolation membrane (IM) to the endoplasmic reticulum (ER) and mediates direct lipid transfer from ER to IM for IM expansion. ATG2 binds to the ER exit site (ERES), which is the membrane source for autophagosome formation, using basic residues in its N-terminal region (NR) and to the expanding edge of the IM through its C-terminal region. The latter binding is assisted by an ATG18-PtdIns3P interaction. ATG2 then extracts phospholipids from the membrane source using its NR and transfers them to ATG9 to the IM through its predicted beta-sheet-rich structure for membrane expansion. The polypeptide is Autophagy-related protein 2 (ATG2) (Eremothecium gossypii (strain ATCC 10895 / CBS 109.51 / FGSC 9923 / NRRL Y-1056) (Yeast)).